The sequence spans 296 residues: Small ribosomal subunit biogenesis GTPase RsgA (296 aa).

The region spanning 63–224 (RNQLVRPPVA…IADTPGFSSY (162 aa)) is the CP-type G domain. Residues 112-115 (SKTD) and 167-175 (GQTGAGKST) each bind GTP. Residues cysteine 248, cysteine 253, histidine 255, and cysteine 261 each coordinate Zn(2+).

Belongs to the TRAFAC class YlqF/YawG GTPase family. RsgA subfamily. As to quaternary structure, monomer. Associates with 30S ribosomal subunit, binds 16S rRNA. The cofactor is Zn(2+).

Its subcellular location is the cytoplasm. One of several proteins that assist in the late maturation steps of the functional core of the 30S ribosomal subunit. Helps release RbfA from mature subunits. May play a role in the assembly of ribosomal proteins into the subunit. Circularly permuted GTPase that catalyzes slow GTP hydrolysis, GTPase activity is stimulated by the 30S ribosomal subunit. The sequence is that of Small ribosomal subunit biogenesis GTPase RsgA from Limosilactobacillus reuteri (strain DSM 20016) (Lactobacillus reuteri).